The sequence spans 396 residues: Jacalin-related lectin 45 (396 aa).

3 Jacalin-type lectin domains span residues 3–138 (KKVT…KTSH), 144–264 (QFRM…NFAV), and 270–392 (VKKL…YVKP).

Belongs to the jacalin lectin family.

The polypeptide is Jacalin-related lectin 45 (JAL45) (Arabidopsis thaliana (Mouse-ear cress)).